We begin with the raw amino-acid sequence, 66 residues long: Probable cytochrome b-c1 complex subunit 9 (66 aa).

The Mitochondrial matrix portion of the chain corresponds to 1–20 (MSNALTNIFYKYVARRNSTW). A helical transmembrane segment spans residues 21–46 (MAGAILGAFVLDSTVSGAVNTFFDSV). At 47 to 66 (NKGKLWKDVYAERVKKGISQ) the chain is on the mitochondrial intermembrane side.

Belongs to the UQCR10/QCR9 family. As to quaternary structure, component of the ubiquinol-cytochrome c oxidoreductase (cytochrome b-c1 complex, complex III, CIII), a multisubunit enzyme composed of 3 respiratory subunits cytochrome b, cytochrome c1 and Rieske protein, 2 core protein subunits, and additional low-molecular weight protein subunits. The complex exists as an obligatory dimer and forms supercomplexes (SCs) in the inner mitochondrial membrane with cytochrome c oxidase (complex IV, CIV).

It is found in the mitochondrion inner membrane. Its function is as follows. Component of the ubiquinol-cytochrome c oxidoreductase, a multisubunit transmembrane complex that is part of the mitochondrial electron transport chain which drives oxidative phosphorylation. The respiratory chain contains 3 multisubunit complexes succinate dehydrogenase (complex II, CII), ubiquinol-cytochrome c oxidoreductase (cytochrome b-c1 complex, complex III, CIII) and cytochrome c oxidase (complex IV, CIV), that cooperate to transfer electrons derived from NADH and succinate to molecular oxygen, creating an electrochemical gradient over the inner membrane that drives transmembrane transport and the ATP synthase. The cytochrome b-c1 complex catalyzes electron transfer from ubiquinol to cytochrome c, linking this redox reaction to translocation of protons across the mitochondrial inner membrane, with protons being carried across the membrane as hydrogens on the quinol. In the process called Q cycle, 2 protons are consumed from the matrix, 4 protons are released into the intermembrane space and 2 electrons are passed to cytochrome c. In Dictyostelium discoideum (Social amoeba), this protein is Probable cytochrome b-c1 complex subunit 9.